Reading from the N-terminus, the 804-residue chain is Probable replication endonuclease from prophage-like region 1 (804 aa).

Residues Y498 and Y502 each act as O-(5'-phospho-DNA)-tyrosine intermediate in the active site.

It belongs to the phage GPA family.

In terms of biological role, possible endonuclease which induces a single-strand cut and initiates DNA replication. This chain is Probable replication endonuclease from prophage-like region 1, found in Salmonella typhi.